A 72-amino-acid chain; its full sequence is MSKEEAIEVEGTVIEPLPNAMFKVKLENDHIVLAHISGKMRKYFIKILPGDKVTVELSPYDLTRGRITYRAK.

The region spanning 1 to 72 is the S1-like domain; sequence MSKEEAIEVE…TRGRITYRAK (72 aa).

It belongs to the IF-1 family. Component of the 30S ribosomal translation pre-initiation complex which assembles on the 30S ribosome in the order IF-2 and IF-3, IF-1 and N-formylmethionyl-tRNA(fMet); mRNA recruitment can occur at any time during PIC assembly.

The protein resides in the cytoplasm. Its function is as follows. One of the essential components for the initiation of protein synthesis. Stabilizes the binding of IF-2 and IF-3 on the 30S subunit to which N-formylmethionyl-tRNA(fMet) subsequently binds. Helps modulate mRNA selection, yielding the 30S pre-initiation complex (PIC). Upon addition of the 50S ribosomal subunit IF-1, IF-2 and IF-3 are released leaving the mature 70S translation initiation complex. This Geotalea uraniireducens (strain Rf4) (Geobacter uraniireducens) protein is Translation initiation factor IF-1.